A 454-amino-acid polypeptide reads, in one-letter code: Tubulin gamma chain (454 aa).

Alanine 142 to glycine 148 contacts GTP.

Belongs to the tubulin family.

It is found in the cytoplasm. The protein resides in the cytoskeleton. Its subcellular location is the microtubule organizing center. The protein localises to the spindle pole body. Its function is as follows. Tubulin is the major constituent of microtubules. The gamma chain is found at microtubule organizing centers (MTOC) such as the spindle pole or the centrosome, suggesting that it is involved in the minus-end nucleation of microtubule assembly. Interacts physically with beta-tubulin and is involved in microtubule function. The sequence is that of Tubulin gamma chain (mipA) from Emericella nidulans (strain FGSC A4 / ATCC 38163 / CBS 112.46 / NRRL 194 / M139) (Aspergillus nidulans).